The sequence spans 212 residues: NADH dehydrogenase [ubiquinone] iron-sulfur protein 8, mitochondrial (212 aa).

A mitochondrion-targeting transit peptide spans 1 to 34; sequence MYRLSSSMLPRALAQAMRTGHLNGQSLHSSAVAA. 2 consecutive 4Fe-4S ferredoxin-type domains span residues 104 to 133 and 143 to 172; these read RRYPSGEERCIACKLCEAICPAQAITIEAE and TRYDIDMTKCIYCGFCQEACPVDAIVEGPN. Residues Cys-113, Cys-116, Cys-119, Cys-123, Cys-152, Cys-155, Cys-158, and Cys-162 each contribute to the [4Fe-4S] cluster site.

Belongs to the complex I 23 kDa subunit family. Complex I is composed of 45 different subunits. This is a component of the iron-sulfur (IP) fragment of the enzyme. Interacts with RAB5IF. [4Fe-4S] cluster is required as a cofactor.

It localises to the mitochondrion inner membrane. The catalysed reaction is a ubiquinone + NADH + 5 H(+)(in) = a ubiquinol + NAD(+) + 4 H(+)(out). Its function is as follows. Core subunit of the mitochondrial membrane respiratory chain NADH dehydrogenase (Complex I) which catalyzes electron transfer from NADH through the respiratory chain, using ubiquinone as an electron acceptor. Essential for the catalytic activity and assembly of complex I. The protein is NADH dehydrogenase [ubiquinone] iron-sulfur protein 8, mitochondrial (Ndufs8) of Mus musculus (Mouse).